Here is a 143-residue protein sequence, read N- to C-terminus: Heat shock protein 16 (143 aa).

The sHSP domain maps to 30–143 (QIPGELSPSI…SQTKKQIAIK (114 aa)).

This sequence belongs to the small heat shock protein (HSP20) family.

The protein localises to the cytoplasm. The protein resides in the nucleus. The sequence is that of Heat shock protein 16 (hsp16) from Schizosaccharomyces pombe (strain 972 / ATCC 24843) (Fission yeast).